A 434-amino-acid chain; its full sequence is RNA-binding protein SRO9 (434 aa).

Residues 1-13 (MSAETAAANTATA) are compositionally biased toward low complexity. Positions 1–243 (MSAETAAANT…FHHNQQHPQQ (243 aa)) are disordered. Positions 26 to 41 (SKQVNLTPAPLPTSSP) are enriched in polar residues. Position 55 is a phosphoserine (S55). Positions 93–124 (KRSGSKNGASNGNSNKSKNNKTAASSTSSSNA) are enriched in low complexity. Residues 125 to 140 (NRKKKHHQHNAKKQQQ) are compositionally biased toward basic residues. S148 bears the Phosphoserine mark. A Glycyl lysine isopeptide (Lys-Gly) (interchain with G-Cter in ubiquitin) cross-link involves residue K156. Over residues 158 to 167 (ATSQENGQST) the composition is skewed to polar residues. Residues 173–195 (PHHRNHHHSHHHNSNGPQRRKFH) show a composition bias toward basic residues. Residues 196 to 208 (NSNNAGMPQNQGF) are compositionally biased toward polar residues. Positions 218 to 227 (RNARNNNNNR) are enriched in low complexity. The span at 228–238 (SKYHNHFHHNQ) shows a compositional bias: basic residues. The 97-residue stretch at 255 to 351 (VQPVLMAINN…KEGDNVTGEA (97 aa)) folds into the HTH La-type RNA-binding domain. Residues K301, K342, and K352 each participate in a glycyl lysine isopeptide (Lys-Gly) (interchain with G-Cter in ubiquitin) cross-link. The disordered stretch occupies residues 396–434 (SLPPVPQQEEESSTELASQEQETKEDSAPVAAGESESSL). S422 is subject to Phosphoserine.

Interacts with HAP1. Component of the HMC including HAP1, SRO9 and YDJ1.

It is found in the cytoplasm. Functionally, may overlap in function with tropomyosin and may be involved in organization of actin filaments. Acts as a multicopy suppressor of RHO3 mutation. RNA-binding protein which may modulate mRNA translation. Involved in heme regulation of HAP1, as a component of the high-molecular-weight complex (HMC). This is RNA-binding protein SRO9 (SRO9) from Saccharomyces cerevisiae (strain ATCC 204508 / S288c) (Baker's yeast).